A 342-amino-acid chain; its full sequence is RNA 3'-terminal phosphate cyclase (342 aa).

Residues Gln-102 and 283-287 contribute to the ATP site; that span reads HLADQ. The Tele-AMP-histidine intermediate role is filled by His-308.

Belongs to the RNA 3'-terminal cyclase family. Type 1 subfamily.

It localises to the cytoplasm. It carries out the reaction a 3'-end 3'-phospho-ribonucleotide-RNA + ATP = a 3'-end 2',3'-cyclophospho-ribonucleotide-RNA + AMP + diphosphate. Catalyzes the conversion of 3'-phosphate to a 2',3'-cyclic phosphodiester at the end of RNA. The mechanism of action of the enzyme occurs in 3 steps: (A) adenylation of the enzyme by ATP; (B) transfer of adenylate to an RNA-N3'P to produce RNA-N3'PP5'A; (C) and attack of the adjacent 2'-hydroxyl on the 3'-phosphorus in the diester linkage to produce the cyclic end product. The biological role of this enzyme is unknown but it is likely to function in some aspects of cellular RNA processing. This chain is RNA 3'-terminal phosphate cyclase, found in Pseudomonas fluorescens (strain ATCC BAA-477 / NRRL B-23932 / Pf-5).